Here is a 196-residue protein sequence, read N- to C-terminus: Endonuclease V (196 aa).

Positions 37 and 98 each coordinate Mg(2+).

Belongs to the endonuclease V family. Requires Mg(2+) as cofactor.

It localises to the cytoplasm. The catalysed reaction is Endonucleolytic cleavage at apurinic or apyrimidinic sites to products with a 5'-phosphate.. DNA repair enzyme involved in the repair of deaminated bases. Selectively cleaves double-stranded DNA at the second phosphodiester bond 3' to a deoxyinosine leaving behind the intact lesion on the nicked DNA. The polypeptide is Endonuclease V (Sulfurisphaera tokodaii (strain DSM 16993 / JCM 10545 / NBRC 100140 / 7) (Sulfolobus tokodaii)).